A 252-amino-acid chain; its full sequence is 3-dehydroquinate dehydratase (252 aa).

Residues serine 21, 46–48 (EWR), and arginine 82 contribute to the 3-dehydroquinate site. Residue histidine 143 is the Proton donor/acceptor of the active site. Lysine 170 acts as the Schiff-base intermediate with substrate in catalysis. 3-dehydroquinate is bound by residues arginine 213, serine 232, and glutamine 236.

The protein belongs to the type-I 3-dehydroquinase family. Homodimer.

It catalyses the reaction 3-dehydroquinate = 3-dehydroshikimate + H2O. It functions in the pathway metabolic intermediate biosynthesis; chorismate biosynthesis; chorismate from D-erythrose 4-phosphate and phosphoenolpyruvate: step 3/7. Functionally, involved in the third step of the chorismate pathway, which leads to the biosynthesis of aromatic amino acids. Catalyzes the cis-dehydration of 3-dehydroquinate (DHQ) and introduces the first double bond of the aromatic ring to yield 3-dehydroshikimate. This chain is 3-dehydroquinate dehydratase, found in Salmonella agona (strain SL483).